A 341-amino-acid chain; its full sequence is Killer cell immunoglobulin-like receptor 2DL3 (341 aa).

An N-terminal signal peptide occupies residues 1 to 21 (MSLMVVSMVCVGFFLLQGAWP). Topologically, residues 22–245 (HEGVHRKPSL…SETGNPRHLH (224 aa)) are extracellular. 2 Ig-like C2-type domains span residues 42 to 107 (EETV…VTHS) and 142 to 205 (GESV…FRDS). Disulfide bonds link cysteine 49–cysteine 100 and cysteine 149–cysteine 198. Residues asparagine 84, asparagine 178, and asparagine 211 are each glycosylated (N-linked (GlcNAc...) asparagine). Residues 220–239 (VTGNPSNSWPSPTEPSSETG) are disordered. Residues 223–239 (NPSNSWPSPTEPSSETG) show a composition bias toward low complexity. Residues 246–265 (VLIGTSVVIILFILLLFFLL) traverse the membrane as a helical segment. Residues 266 to 341 (HRWCCNKKNA…VYTELPNAEP (76 aa)) lie on the Cytoplasmic side of the membrane.

Belongs to the immunoglobulin superfamily. Interacts with ARRB2.

It localises to the cell membrane. Functionally, receptor on natural killer (NK) cells for HLA-C alleles (HLA-Cw1, HLA-Cw3 and HLA-Cw7). Inhibits the activity of NK cells thus preventing cell lysis. This chain is Killer cell immunoglobulin-like receptor 2DL3, found in Homo sapiens (Human).